Consider the following 420-residue polypeptide: Glycogen synthase kinase-3 beta (420 aa).

A compositionally biased stretch (polar residues) spans 1–22; it reads MSGRPRTTSFAESCKPVQQPSA. The tract at residues 1–53 is disordered; it reads MSGRPRTTSFAESCKPVQQPSAFGSMKVSRDKDGSKVTTVVATPGQGPDRPQE. A Phosphoserine; by PKB/AKT1, RPS6KA3 and SGK3 modification is found at Ser9. Cys14 carries S-palmitoyl cysteine lipidation. The Protein kinase domain maps to 56–340; it reads YTDTKVIGNG…PLEACAHSFF (285 aa). ATP contacts are provided by residues 62–70 and Lys85; that span reads IGNGSFGVV. The Proton acceptor role is filled by Asp181. Tyr216 is modified (phosphotyrosine). Residues 385–420 are disordered; it reads QAAASPPANATAASDTNAGDRGQTNNAASASASNST. Low complexity-rich tracts occupy residues 386-401 and 409-420; these read AAAS…SDTN and NNAASASASNST. Phosphoserine is present on Ser389.

This sequence belongs to the protein kinase superfamily. CMGC Ser/Thr protein kinase family. GSK-3 subfamily. Monomer. Interacts with DAB2IP (via C2 domain); the interaction stimulates GSK3B kinase activation. Interacts (via C2 domain) with PPP2CA. Interacts with ARRB2, AXIN1, CABYR, DISC1, MMP2, MUC1, NIN, PRUNE1 and ZBED3. Interacts with AXIN1; the interaction mediates hyperphosphorylation of CTNNB1 leading to its ubiquitination and destruction. Interacts with and phosphorylates SNAI1. Interacts with DNM1L (via a C-terminal domain). Found in a complex composed of MACF1, APC, AXIN1, CTNNB1 and GSK3B. Interacts with SGK3. Interacts with the CLOCK-BMAL1 heterodimer. Interacts with the BMAL1. Interacts with CTNND2. The complex composed, at least, of APC, CTNNB1 and GSK3B interacts with JPT1; the interaction requires the inactive form of GSK3B (phosphorylated at 'Ser-9'). Forms a complex composed of PRKAR2A or PRKAR2B, GSK3B and GSKIP through GSKIP interaction; facilitates PKA-induced phosphorylation and regulates GSK3B activity. Interacts with GSKIP. Interacts with GID8. Interacts with PIWIL2. Interacts with LMBR1L. Interacts with DDX3X. Interacts with BIRC2. Interacts with TNFRSF10B; TNFRSF10B stimulation inhibits GSK3B kinase activity. Found in a complex with SLC39A6, SLC39A10 and with GSK3B that controls NCAM1 phosphorylation. Interacts with PKP3 (via ARM repeats); the interaction may be involved in PKP3 protein degradation. In terms of processing, phosphorylated by AKT1 and ILK1. Upon insulin-mediated signaling, the activated PKB/AKT1 and RPS6KA3 protein kinases phosphorylate and deactivate GSK3B, resulting in the dephosphorylation and activation of GYS1. Activated by phosphorylation at Tyr-216. Inactivated by phosphorylation at Ser-9. Phosphorylated in a circadian manner in the hippocampus. Mono-ADP-ribosylation by PARP10 negatively regulates kinase activity. Post-translationally, palmitoylated. Palmitoylation by ZDHHC4 prevents AKT1-mediated phosphorylation.

The protein resides in the cytoplasm. Its subcellular location is the nucleus. The protein localises to the membrane. It localises to the cell membrane. It catalyses the reaction L-seryl-[tau protein] + ATP = O-phospho-L-seryl-[tau protein] + ADP + H(+). The enzyme catalyses L-threonyl-[tau protein] + ATP = O-phospho-L-threonyl-[tau protein] + ADP + H(+). The catalysed reaction is L-seryl-[protein] + ATP = O-phospho-L-seryl-[protein] + ADP + H(+). It carries out the reaction L-threonyl-[protein] + ATP = O-phospho-L-threonyl-[protein] + ADP + H(+). With respect to regulation, activated by phosphorylation at Tyr-216. In response to insulin, inhibited by phosphorylation at Ser-9 by PKB/AKT1; phosphorylation at this site causes a conformational change, preventing access of substrates to the active site. Inhibited by IL22 treatment which also triggers phosphorylation at Ser-9, promoting inactivation. Inhibited by lithium. Functionally, constitutively active protein kinase that acts as a negative regulator in the hormonal control of glucose homeostasis, Wnt signaling and regulation of transcription factors and microtubules, by phosphorylating and inactivating glycogen synthase (GYS1 or GYS2), EIF2B, CTNNB1/beta-catenin, APC, AXIN1, DPYSL2/CRMP2, JUN, NFATC1/NFATC, MAPT/TAU and MACF1. Requires primed phosphorylation of the majority of its substrates. In skeletal muscle, contributes to insulin regulation of glycogen synthesis by phosphorylating and inhibiting GYS1 activity and hence glycogen synthesis. May also mediate the development of insulin resistance by regulating activation of transcription factors. Regulates protein synthesis by controlling the activity of initiation factor 2B (EIF2BE/EIF2B5) in the same manner as glycogen synthase. In Wnt signaling, GSK3B forms a multimeric complex with APC, AXIN1 and CTNNB1/beta-catenin and phosphorylates the N-terminus of CTNNB1 leading to its degradation mediated by ubiquitin/proteasomes. Phosphorylates JUN at sites proximal to its DNA-binding domain, thereby reducing its affinity for DNA. Phosphorylates NFATC1/NFATC on conserved serine residues promoting NFATC1/NFATC nuclear export, shutting off NFATC1/NFATC gene regulation, and thereby opposing the action of calcineurin. Phosphorylates MAPT/TAU on 'Thr-548', decreasing significantly MAPT/TAU ability to bind and stabilize microtubules. MAPT/TAU is the principal component of neurofibrillary tangles in Alzheimer disease. Plays an important role in ERBB2-dependent stabilization of microtubules at the cell cortex. Phosphorylates MACF1, inhibiting its binding to microtubules which is critical for its role in bulge stem cell migration and skin wound repair. Probably regulates NF-kappa-B (NFKB1) at the transcriptional level and is required for the NF-kappa-B-mediated anti-apoptotic response to TNF-alpha (TNF/TNFA). Negatively regulates replication in pancreatic beta-cells, resulting in apoptosis, loss of beta-cells and diabetes. Through phosphorylation of the anti-apoptotic protein MCL1, may control cell apoptosis in response to growth factors deprivation. Phosphorylates MUC1 in breast cancer cells, decreasing the interaction of MUC1 with CTNNB1/beta-catenin. Is necessary for the establishment of neuronal polarity and axon outgrowth. Phosphorylates MARK2, leading to inhibition of its activity. Phosphorylates SIK1 at 'Thr-182', leading to sustainment of its activity. Phosphorylates ZC3HAV1 which enhances its antiviral activity. Phosphorylates SNAI1, leading to its ubiquitination and proteasomal degradation. Phosphorylates SFPQ at 'Thr-687' upon T-cell activation. Phosphorylates NR1D1 st 'Ser-55' and 'Ser-59' and stabilizes it by protecting it from proteasomal degradation. Regulates the circadian clock via phosphorylation of the major clock components including BMAL1, CLOCK and PER2. Phosphorylates CLOCK AT 'Ser-427' and targets it for proteasomal degradation. Phosphorylates BMAL1 at 'Ser-17' and 'Ser-21' and primes it for ubiquitination and proteasomal degradation. Phosphorylates FBXL2 at 'Thr-404' and primes it for ubiquitination by the SCF(FBXO3) complex and proteasomal degradation. Phosphorylates OGT at 'Ser-3' or 'Ser-4' which positively regulates its activity. Phosphorylates MYCN in neuroblastoma cells which may promote its degradation. Regulates the circadian rhythmicity of hippocampal long-term potentiation and BMAL1 and PER2 expression. Acts as a regulator of autophagy by mediating phosphorylation of KAT5/TIP60 under starvation conditions, activating KAT5/TIP60 acetyltransferase activity and promoting acetylation of key autophagy regulators, such as ULK1 and RUBCNL/Pacer. Negatively regulates extrinsic apoptotic signaling pathway via death domain receptors. Promotes the formation of an anti-apoptotic complex, made of DDX3X, BRIC2 and GSK3B, at death receptors, including TNFRSF10B. The anti-apoptotic function is most effective with weak apoptotic signals and can be overcome by stronger stimulation. Phosphorylates E2F1, promoting the interaction between E2F1 and USP11, stabilizing E2F1 and promoting its activity. Phosphorylates mTORC2 complex component RICTOR at 'Ser-1235' in response to endoplasmic stress, inhibiting mTORC2. Phosphorylates FXR1, promoting FXR1 ubiquitination by the SCF(FBXO4) complex and FXR1 degradation by the proteasome. Phosphorylates interleukin-22 receptor subunit IL22RA1, preventing its proteasomal degradation. In Rattus norvegicus (Rat), this protein is Glycogen synthase kinase-3 beta.